The chain runs to 1025 residues: Interferon-induced helicase C domain-containing protein 1 (1025 aa).

2 CARD domains span residues 7 to 97 and 110 to 190; these read AEDS…YVKP and AHDE…QTGN. Glycyl lysine isopeptide (Lys-Gly) (interchain with G-Cter in ISG15) cross-links involve residues Lys-23 and Lys-43. Residues 273-297 are disordered; it reads SLGHNSNMGRDSGTMGSDSDESVIQ. Polar residues predominate over residues 275-297; sequence GHNSNMGRDSGTMGSDSDESVIQ. Ser-289, Ser-291, and Ser-302 each carry phosphoserine. Residues 317 to 510 form the Helicase ATP-binding domain; the sequence is AQPALDGKNI…SEAEKHILNI (194 aa). 2 positions are modified to phosphoserine: Ser-645 and Ser-648. Positions 700–872 constitute a Helicase C-terminal domain; it reads KLIKLRNTIL…NMKPEEYAHK (173 aa). Ser-828 carries the post-translational modification Phosphoserine; by RIOK3. Residues 893–1020 enclose the RLR CTR domain; sequence AKQYNDNPSL…PDLDYSEYCL (128 aa). Positions 907, 910, 962, and 964 each coordinate Zn(2+).

It belongs to the helicase family. RLR subfamily. As to quaternary structure, monomer in the absence of ligands and homodimerizes in the presence of dsRNA ligands. Can assemble into helical or linear polymeric filaments on long dsRNA. Interacts with MAVS/IPS1. Interacts (via the CARD domains) with TKFC, the interaction is inhibited by viral infection. Interacts with PCBP2. Interacts with NLRC5. Interacts with PIAS2-beta. Interacts with DDX60. Interacts with ANKRD17. Interacts with IKBKE. Interacts with ATG5 and ATG12, either as ATG5 and ATG12 monomers or as ATG12-ATG5 conjugates. Interacts with ZCCHC3; leading to activate IFIH1/MDA5. Interacts with RNF123. Interacts with DDX3X. Interacts with NOD1; this interaction promotes transcription of antiviral genes and inhibition of viral replication. Interacts with ECSIT; this interaction bridges IFIH1 to the MAVS complex at the mitochondrion. During apoptosis, processed into 3 cleavage products. The helicase-containing fragment, once liberated from the CARD domains, translocate from the cytoplasm to the nucleus. The processed protein significantly sensitizes cells to DNA degradation. In terms of processing, sumoylated. Sumoylation positively regulates its role in type I interferon induction and is enhanced by PIAS2-beta. Post-translationally, ubiquitinated by RNF125, leading to its degradation by the proteasome. USP17/UPS17L2-dependent deubiquitination positively regulates the receptor. Ubiquitinated by TRIM25 via 'Lys-63'-linked ubiquitination, promoting activation of IFIH1/MDA5. Ubiquitinated by TRIM40 via 'Lys-48'-linked ubiquitination; leading to proteasomal degradation. Ubiquitinated by TRIM65 via 'Lys-63'-linked ubiquitination, promoting activation of IFIH1/MDA5. ISGylated by ISG15. ISGylation increases upon infection with viruses. ISGylation at Lys-23 and Lys-43 is dependent of dephosphorylation, regulates mitochondrial translocation and oligomerization. Essential for IFIH1/MDA5-mediated cytokine responses and restriction of virus replication. In terms of processing, phosphorylated. Dephosphorylated by phsophatases PP1; dephosphorylation precedes and is required for ISGylation. As to expression, expression is prominent in lung, liver, kidney, heart and spleen (at protein level). Widely expressed at low level.

The protein resides in the cytoplasm. It is found in the nucleus. Its subcellular location is the mitochondrion. The enzyme catalyses ATP + H2O = ADP + phosphate + H(+). Functionally, innate immune receptor which acts as a cytoplasmic sensor of viral nucleic acids and plays a major role in sensing viral infection and in the activation of a cascade of antiviral responses including the induction of type I interferons and pro-inflammatory cytokines. Its ligands include mRNA lacking 2'-O-methylation at their 5' cap and long-dsRNA (&gt;1 kb in length). Upon ligand binding it associates with mitochondria antiviral signaling protein (MAVS/IPS1) which activates the IKK-related kinases: TBK1 and IKBKE which phosphorylate interferon regulatory factors: IRF3 and IRF7 which in turn activate transcription of antiviral immunological genes, including interferons (IFNs); IFN-alpha and IFN-beta. Responsible for detecting the Picornaviridae family members such as encephalomyocarditis virus (EMCV), mengo encephalomyocarditis virus (ENMG), and theiler's murine encephalomyelitis virus (TMEV). Can also detect other viruses such as dengue virus (DENV), west Nile virus (WNV), and reovirus. Also involved in antiviral signaling in response to viruses containing a dsDNA genome, such as vaccinia virus. Plays an important role in amplifying innate immune signaling through recognition of RNA metabolites that are produced during virus infection by ribonuclease L (RNase L). May play an important role in enhancing natural killer cell function and may be involved in growth inhibition and apoptosis in several tumor cell lines. The sequence is that of Interferon-induced helicase C domain-containing protein 1 from Mus musculus (Mouse).